Reading from the N-terminus, the 202-residue chain is Putative pituitary tumor-transforming gene 3 protein (202 aa).

The D-box motif lies at arginine 61–leucine 64. A disordered region spans residues valine 67 to lysine 92. The SH3-binding motif lies at proline 163–proline 173.

It belongs to the securin family.

Its subcellular location is the cytoplasm. The protein localises to the nucleus. This is Putative pituitary tumor-transforming gene 3 protein (PTTG3) from Pongo pygmaeus (Bornean orangutan).